The primary structure comprises 278 residues: Serine/threonine-protein phosphatase PGAM5, mitochondrial (278 aa).

The chain crosses the membrane as a helical span at residues 7 to 27 (LIAGGSAAAAAAAILGAAAVG).

The protein belongs to the phosphoglycerate mutase family. BPG-dependent PGAM subfamily. Post-translationally, phosphorylated by the RIPK1/RIPK3 complex under necrotic conditions. This phosphorylation increases PGAM5 phosphatase activity.

The protein localises to the mitochondrion outer membrane. It carries out the reaction O-phospho-L-seryl-[protein] + H2O = L-seryl-[protein] + phosphate. The enzyme catalyses O-phospho-L-threonyl-[protein] + H2O = L-threonyl-[protein] + phosphate. Its function is as follows. Displays phosphatase activity for serine/threonine residues. Has apparently no phosphoglycerate mutase activity. May be regulator of mitochondrial dynamics. May be a central mediator for programmed necrosis. The protein is Serine/threonine-protein phosphatase PGAM5, mitochondrial (pgam5) of Xenopus tropicalis (Western clawed frog).